Reading from the N-terminus, the 569-residue chain is Probable pyruvate decarboxylase Pdc101 (569 aa).

Positions 33 and 120 each coordinate substrate. Ser-233 is modified (phosphoserine). The segment at 396 to 478 (DSWFNGLQMK…FLLNNRGYTI (83 aa)) is thiamine pyrophosphate binding. Asp-446, Asn-473, and Gly-475 together coordinate Mg(2+). Glu-479 contacts substrate. Residue Thr-521 is modified to Phosphothreonine. Ser-522 is subject to Phosphoserine.

Belongs to the TPP enzyme family. In terms of assembly, homotetramer. Requires a metal cation as cofactor. The cofactor is thiamine diphosphate.

It catalyses the reaction a 2-oxocarboxylate + H(+) = an aldehyde + CO2. The polypeptide is Probable pyruvate decarboxylase Pdc101 (pdc101) (Schizosaccharomyces pombe (strain 972 / ATCC 24843) (Fission yeast)).